A 263-amino-acid polypeptide reads, in one-letter code: Peptidoglycan-N-acetylmuramic acid deacetylase PdaA (263 aa).

The N-terminal stretch at M1–A23 is a signal peptide. In terms of domain architecture, NodB homology spans K66–K247. D73 (proton acceptor) is an active-site residue. 2 residues coordinate a divalent metal cation: H124 and H128. The Proton donor role is filled by H222.

It belongs to the polysaccharide deacetylase family.

In terms of biological role, catalyzes the deacetylation of N-acetylmuramic acid (MurNAc) residues in glycan strands of peptidoglycan, leading to the formation of muramic delta-lactam residues in spore cortex, after transpeptidation of deacetylated muramic acid residues. PdaA probably carries out both deacetylation and lactam ring formation and requires the product of CwlD activity on peptidoglycan as a substrate. Is required for germination. Cannot use chitin oligomer (hexa-N-acetylchitohexaose) as a substrate. This is Peptidoglycan-N-acetylmuramic acid deacetylase PdaA (pdaA) from Bacillus subtilis (strain 168).